Reading from the N-terminus, the 333-residue chain is Geminin coiled-coil domain-containing protein 1 (333 aa).

Positions 83 to 118 (QLYRNKQLQDTLLQKEEELARLHEENNHLRQYLNST) form a coiled coil. Basic residues predominate over residues 145 to 154 (KEKRKPKEHR). Positions 145-165 (KEKRKPKEHRHSPAEIPQFKT) are disordered.

This sequence belongs to the GEMC1 family. In terms of processing, highly phosphorylated by CDK2; stimulates initiation of DNA replication.

The protein resides in the nucleus. Regulator of DNA replication. Promotes initiation of chromosomal DNA replication by mediating TOPBP1- and CDK2-dependent recruitment of CDC45L onto replication origins. The polypeptide is Geminin coiled-coil domain-containing protein 1 (Gmnc) (Mus musculus (Mouse)).